Consider the following 406-residue polypeptide: ESX-5 secretion system protein EccE5 (406 aa).

2 helical membrane-spanning segments follow: residues 9–29 and 43–63; these read LALS…ILAV and VAWW…VVSY.

This sequence belongs to the EccE family. In terms of assembly, part of the ESX-5 / type VII secretion system (T7SS), which is composed of cytosolic and membrane components. The ESX-5 membrane complex is composed of EccB5, EccC5, EccD5 and EccE5.

Its subcellular location is the cell inner membrane. Functionally, part of the ESX-5 specialized secretion system, which is responsible for the secretion of EsxN and a number of PE_PGRS and PPE proteins, including PPE41. This chain is ESX-5 secretion system protein EccE5, found in Mycobacterium tuberculosis (strain ATCC 25618 / H37Rv).